A 136-amino-acid polypeptide reads, in one-letter code: MGIYQWRDKKKPSGGKRRYYYKVKRKYAAGRPPTYTTLSAAEEEERKPVRARGGSYKIKAKKVAFAVVSNPKTGEARKARILRIVETPAHREYARRGIIVKGAVIDTTLGRAVVTSRPGQEGVVNAVLLEEQGQKQ.

Belongs to the eukaryotic ribosomal protein eS8 family. Part of the 30S ribosomal subunit.

The polypeptide is Small ribosomal subunit protein eS8 (rps8e) (Aeropyrum pernix (strain ATCC 700893 / DSM 11879 / JCM 9820 / NBRC 100138 / K1)).